We begin with the raw amino-acid sequence, 149 residues long: Large ribosomal subunit protein eL19 (149 aa).

Residues 67–90 are disordered; it reads KRKLQKRKGRRRGHGSRKGAKGAR.

The protein belongs to the eukaryotic ribosomal protein eL19 family. As to quaternary structure, part of the 50S ribosomal subunit.

Binds to the 23S rRNA. This chain is Large ribosomal subunit protein eL19, found in Archaeoglobus fulgidus (strain ATCC 49558 / DSM 4304 / JCM 9628 / NBRC 100126 / VC-16).